The chain runs to 468 residues: 6-phospho-beta-galactosidase (468 aa).

Residues Gln-19, His-116, Asn-159, Glu-160, and Asn-297 each contribute to the D-galactose 6-phosphate site. Catalysis depends on Glu-160, which acts as the Proton donor. The active-site Nucleophile is Glu-375. D-galactose 6-phosphate contacts are provided by Ser-428, Trp-429, Lys-435, and Tyr-437.

This sequence belongs to the glycosyl hydrolase 1 family.

It carries out the reaction a 6-phospho-beta-D-galactoside + H2O = D-galactose 6-phosphate + an alcohol. It functions in the pathway carbohydrate metabolism; lactose degradation; D-galactose 6-phosphate and beta-D-glucose from lactose 6-phosphate: step 1/1. The chain is 6-phospho-beta-galactosidase from Streptococcus pyogenes serotype M1.